Reading from the N-terminus, the 185-residue chain is Ribosome-recycling factor (185 aa).

This sequence belongs to the RRF family.

The protein resides in the cytoplasm. Functionally, responsible for the release of ribosomes from messenger RNA at the termination of protein biosynthesis. May increase the efficiency of translation by recycling ribosomes from one round of translation to another. In Corynebacterium aurimucosum (strain ATCC 700975 / DSM 44827 / CIP 107346 / CN-1) (Corynebacterium nigricans), this protein is Ribosome-recycling factor.